The following is a 318-amino-acid chain: Olfactory receptor 2T34 (318 aa).

The Extracellular segment spans residues 1–30 (MCSGNQTSQNQTASTDFTLTGLFAESKHAA). N-linked (GlcNAc...) asparagine glycans are attached at residues N5 and N10. The chain crosses the membrane as a helical span at residues 31–54 (LLYTVTFLLFLMALTGNALLILLI). The Cytoplasmic segment spans residues 55–62 (HSEPRLHT). The chain crosses the membrane as a helical span at residues 63-84 (PMYFFISQLALMDLMYLCVTVP). Topologically, residues 85-105 (KMLVGQVTGDDTISPSGCGIQ) are extracellular. A disulfide bridge connects residues C102 and C194. A helical transmembrane segment spans residues 106-125 (MFFHLTLAGAEVFLLAAMAY). The Cytoplasmic segment spans residues 126–144 (DRYAAVCRPLHYPLLMNQR). Residues 145 to 163 (VCQLLVSACWVLGMVDGLL) traverse the membrane as a helical segment. The Extracellular portion of the chain corresponds to 164–200 (LTPITMSFPFCQSRKILSFFCETPALLKLSCSDVSLY). A helical transmembrane segment spans residues 201–224 (KMLTYLCCILMLLTPIMVISSSYT). Over 225–241 (LILHLIHRMNSAAGRRK) the chain is Cytoplasmic. A helical transmembrane segment spans residues 242–264 (ALATCSSHMIIVLLLFGASFYTY). The Extracellular portion of the chain corresponds to 265 to 277 (MLRSSYHTAEQDM). The chain crosses the membrane as a helical span at residues 278-297 (MVSAFYTIFTPVLNPLIYSL). The Cytoplasmic portion of the chain corresponds to 298 to 318 (RNKDVTRALRSMMQSRMNQEK).

It belongs to the G-protein coupled receptor 1 family.

It localises to the cell membrane. Functionally, odorant receptor. This chain is Olfactory receptor 2T34 (OR2T34), found in Homo sapiens (Human).